Consider the following 82-residue polypeptide: Small ribosomal subunit protein uS17 (82 aa).

It belongs to the universal ribosomal protein uS17 family. As to quaternary structure, part of the 30S ribosomal subunit.

In terms of biological role, one of the primary rRNA binding proteins, it binds specifically to the 5'-end of 16S ribosomal RNA. This is Small ribosomal subunit protein uS17 from Sulfurimonas denitrificans (strain ATCC 33889 / DSM 1251) (Thiomicrospira denitrificans (strain ATCC 33889 / DSM 1251)).